We begin with the raw amino-acid sequence, 265 residues long: Polyprenol monophosphomannose synthase (265 aa).

Basic and acidic residues predominate over residues 1-10 (MSVPGEREQG). The tract at residues 1 to 21 (MSVPGEREQGAGEDPATVRPT) is disordered.

Belongs to the glycosyltransferase 2 family. As to quaternary structure, interacts with Lnt (also called Ppm2, AC A0QZ13) upon coexpression in E.coli, which increases the PPM synthase activity of this protein.

The protein resides in the cytoplasm. The catalysed reaction is a di-trans,poly-cis-dolichyl phosphate + GDP-alpha-D-mannose = a di-trans,poly-cis-dolichyl beta-D-mannosyl phosphate + GDP. Its function is as follows. Transfers mannose from GDP-mannose to lipid acceptors to form polyprenol monophosphomannose (PPM); catalytic activity in vitro is enhanced by Lnt (AC A0QZ13). PMM is an alkai-stable sugar donor which adds mannose-phosphate residues to triacylated-PIM2, eventually leading to generation of the cell wall glycolipid lipoglycan modulins lipoarabinomannan (LAM) and lipomannan (LM). This is Polyprenol monophosphomannose synthase from Mycolicibacterium smegmatis (strain ATCC 700084 / mc(2)155) (Mycobacterium smegmatis).